The following is a 166-amino-acid chain: Thioredoxin, mitochondrial (166 aa).

A mitochondrion-targeting transit peptide spans 1–59 (MAQRLLLGRFLTSVISRKPPQGVWASLTSKTLQTPQYNAGGLTVMPSPARTVHTTRVCL). The 106-residue stretch at 61-166 (TFNVQDGPDF…LEAFLKKLIG (106 aa)) folds into the Thioredoxin domain. Active-site nucleophile residues include C90 and C93. C90 and C93 are joined by a disulfide. Residue K152 is modified to N6-acetyllysine; alternate. K152 carries the post-translational modification N6-succinyllysine; alternate.

This sequence belongs to the thioredoxin family. Monomer.

The protein resides in the mitochondrion. Functionally, important for the control of mitochondrial reactive oxygen species homeostasis, apoptosis regulation and cell viability. Is involved in various redox reactions including the reduction of protein disulfide bonds, through the reversible oxidation of its active center dithiol to a disulfide. This Mus musculus (Mouse) protein is Thioredoxin, mitochondrial (Txn2).